The primary structure comprises 303 residues: Lipoyl synthase (303 aa).

The [4Fe-4S] cluster site is built by cysteine 40, cysteine 45, cysteine 51, cysteine 67, cysteine 71, cysteine 74, and serine 280. In terms of domain architecture, Radical SAM core spans 53–269 (AVRKTATFMI…KEIALSKGFS (217 aa)).

This sequence belongs to the radical SAM superfamily. Lipoyl synthase family. The cofactor is [4Fe-4S] cluster.

The protein resides in the cytoplasm. It catalyses the reaction [[Fe-S] cluster scaffold protein carrying a second [4Fe-4S](2+) cluster] + N(6)-octanoyl-L-lysyl-[protein] + 2 oxidized [2Fe-2S]-[ferredoxin] + 2 S-adenosyl-L-methionine + 4 H(+) = [[Fe-S] cluster scaffold protein] + N(6)-[(R)-dihydrolipoyl]-L-lysyl-[protein] + 4 Fe(3+) + 2 hydrogen sulfide + 2 5'-deoxyadenosine + 2 L-methionine + 2 reduced [2Fe-2S]-[ferredoxin]. Its pathway is protein modification; protein lipoylation via endogenous pathway; protein N(6)-(lipoyl)lysine from octanoyl-[acyl-carrier-protein]. In terms of biological role, catalyzes the radical-mediated insertion of two sulfur atoms into the C-6 and C-8 positions of the octanoyl moiety bound to the lipoyl domains of lipoate-dependent enzymes, thereby converting the octanoylated domains into lipoylated derivatives. This chain is Lipoyl synthase, found in Halalkalibacterium halodurans (strain ATCC BAA-125 / DSM 18197 / FERM 7344 / JCM 9153 / C-125) (Bacillus halodurans).